Consider the following 494-residue polypeptide: MLASGLLLAALLACLTVMILLSVWRQRKLWGKLPPGPTPLPFIGNYLQLNTEQMYDSLMKIRDRYGPVFTIHLGPRRIVVLCGQEAVKEALVDQAEDFSGRGEQATFDWLFKGYGVAFSTWERARPLRRFAISTLRDFGVGKRGIEERIQEEAGFLIEAFRDTRGAFIDPTFFLSRTVSNVISSIVFGDRFDYEDKEFLSLLRMMLGSFQFTATPTGQLYEMFYSVMKHLPGPQQQAFKELEGLRDFIAKKVERNQRTLDPNSPRDFIDSFLIRMQEEKKDPKSEFHMKNLVLTTLNLFFAGTETVSTTMRYGFLLLMKHPDVEAKVHEEIDRVIGRNRQPKFEDRAKMPYTEAVIHEIQRFTDMIPMGLARRVTRDTKFRDFLLPKGTEVFPMLGSVLKDPKFFSKPREFYPQHFLDEKGQFKKSDAFMPFSVGKRYCLGEGLARMELFLFFTTIMQNFRFRSQQAPQDIDVSPKHVGFATIPRTYTMSFVPR.

N6-acetyllysine is present on Lys379. Cys439 lines the heme pocket.

It belongs to the cytochrome P450 family. Requires heme as cofactor. As to expression, expressed in liver and lung as well as in nasal tissues.

The protein resides in the endoplasmic reticulum membrane. It localises to the microsome membrane. The enzyme catalyses an organic molecule + reduced [NADPH--hemoprotein reductase] + O2 = an alcohol + oxidized [NADPH--hemoprotein reductase] + H2O + H(+). Its function is as follows. Catalyzes the oxygenation of a variety of substrates, including ethanol and procarcinogens such as N-nitrosodiethylamine and phenacetin. Has no or little activity as a coumarin 7-hydroxylase and in the formation of androstenedione from testosterone. This Oryctolagus cuniculus (Rabbit) protein is Cytochrome P450 2A11 (CYP2A11).